A 348-amino-acid chain; its full sequence is Alpha-2-HS-glycoprotein (348 aa).

Positions 1–18 (MKTLVLLLCFTLLWGCQS) are cleaved as a signal peptide. A Cystatin fetuin-A-type 1 domain is found at 19-133 (APQGTGLGFR…QFSVMHTKCH (115 aa)). 6 disulfide bridges follow: cysteine 32-cysteine 339, cysteine 89-cysteine 100, cysteine 114-cysteine 132, cysteine 146-cysteine 149, cysteine 208-cysteine 219, and cysteine 230-cysteine 247. Asparagine 99 carries N-linked (GlcNAc...) asparagine glycosylation. A phosphoserine mark is found at serine 134 and serine 138. In terms of domain architecture, Cystatin fetuin-A-type 2 spans 144–255 (KVCPHCALLT…TCTAFPTQAN (112 aa)). Residues asparagine 156 and asparagine 176 are each glycosylated (N-linked (GlcNAc...) asparagine). Phosphoserine is present on residues serine 307, serine 311, serine 314, and serine 316.

Belongs to the fetuin family. Phosphorylated by FAM20C in the extracellular medium. In terms of tissue distribution, expressed by the liver and secreted in plasma.

It is found in the secreted. This Meriones unguiculatus (Mongolian jird) protein is Alpha-2-HS-glycoprotein (AHSG).